The chain runs to 848 residues: Xylosyltransferase (848 aa).

Residues 1–14 lie on the Cytoplasmic side of the membrane; the sequence is MSLHRTLRRFLRKW. A helical; Signal-anchor for type II membrane protein transmembrane segment spans residues 15-35; sequence KALVYAVSFILLIQAFFTFQS. Topologically, residues 36–843 are lumenal; the sequence is SPNLMEEEHL…PKTELISVKP (808 aa). Disulfide bonds link cysteine 145/cysteine 173, cysteine 189/cysteine 427, cysteine 446/cysteine 459, and cysteine 448/cysteine 457. UDP-alpha-D-xylose is bound by residues valine 219, aspartate 247, and 276 to 278; that span reads TIW. Asparagine 306 carries an N-linked (GlcNAc...) asparagine glycan. Position 379–380 (379–380) interacts with UDP-alpha-D-xylose; sequence DW. UDP-alpha-D-xylose-binding positions include serine 460 and 482–483; that span reads RK. Intrachain disulfides connect cysteine 529-cysteine 811 and cysteine 794-cysteine 822. N-linked (GlcNAc...) asparagine glycosylation occurs at asparagine 530. Positions 824–848 are disordered; the sequence is NTNWSSLSPDPKTELISVKPDGRIR. The N-linked (GlcNAc...) asparagine glycan is linked to asparagine 826.

It belongs to the glycosyltransferase 14 family. XylT subfamily. A divalent metal cation is required as a cofactor.

The protein resides in the endoplasmic reticulum membrane. It is found in the golgi apparatus membrane. It catalyses the reaction UDP-alpha-D-xylose + L-seryl-[protein] = 3-O-(beta-D-xylosyl)-L-seryl-[protein] + UDP + H(+). The protein operates within glycan metabolism; chondroitin sulfate biosynthesis. It participates in glycan metabolism; heparan sulfate biosynthesis. Catalyzes the first step in biosynthesis of glycosaminoglycan. Transfers D-xylose from UDP-D-xylose to specific serine residues of the core protein. Initial enzyme in the biosynthesis of chondroitin sulfate and dermatan sulfate proteoglycans in fibroblasts and chondrocytes. In Ciona intestinalis (Transparent sea squirt), this protein is Xylosyltransferase (xt).